We begin with the raw amino-acid sequence, 98 residues long: MMIKQETIGYMTLKSDAAKIEALLTKQFDALCLSQCPIIEEIIDTQLFGFTKEVDFAKRVRLISDQEGSQLVNELETRINQLYLEIYQTQAQNEVHRN.

The protein belongs to the UPF0358 family.

The polypeptide is UPF0358 protein LCA_1078 (Latilactobacillus sakei subsp. sakei (strain 23K) (Lactobacillus sakei subsp. sakei)).